Reading from the N-terminus, the 307-residue chain is Dioxygenase cdmD (307 aa).

Positions 146, 148, and 226 each coordinate Fe cation.

It belongs to the PhyH family. As to quaternary structure, homodimer. Requires Fe cation as cofactor.

It carries out the reaction verruculide A + 2-oxoglutarate + O2 = chrodrimanin T + succinate + CO2. The enzyme catalyses chrodrimanin E + 2-oxoglutarate + O2 = chrodrimanin A + succinate + CO2. It participates in secondary metabolite biosynthesis; terpenoid biosynthesis. Dioxygenase; part of the gene cluster that mediates the biosynthesis of chrodrimanin B, a meroterpenoid that acts as a potent blocker of insect GABA-gated chloride channels. The first step of the pathway is the biosynthesis of 6-hydroxymellein by the polyketide synthase cdmE. The prenyltransferase cdmH acts as a 6-hydroxymellein 5-farnesyltransferase and produces the hydrophobic metabolite verruculide C. The FAD-dependent monooxygenase cdmI further converts verruculide C into verruculide B. The terpene cyclase cdmG then produced the pentacyclic molecule 3-hydroxypentacecilide A, the backbone structure of chrodrimanin B, via folding the farnesyl moiety of the substrate into the chair-boat conformation. The short-chain dehydrogenase/reductase cdmF functions as the 3-OH dehydrogenase that oxidizes the C-3 hydroxyl group of 3-hydroxypentacecilide A and produces chrodrimanin C, the dehydrogenated product of 3-hydroxypentacecilide A. The cytochrome P450 monooxygenase cdmJ then accepts both 3-hydroxypentacecilide A and chrodrimanin C and functions as a C-7-beta-hydroxylase to produce respectively chrodrimanin H and chrodrimanin F. The dioxygenase cdmA accepts chrodrimanin H to afford chrodrimanin E, which is further transformed to chrodrimanin A by the dioxygenase cdmD. CdmA can also accept chrodrimanin C as substrate to convert it into verruculide A, which is further converted into chrodrimanin T by cdmD. The last step of the biosynthesis is proposed to be performed by the acetyltransferase cdmC which acetylates chrodrimanin A to yield chrodrimanin B. The pathway may also lead to the production of additional shunt products, including chrodrimanins T and U. In Talaromyces verruculosus (Penicillium verruculosum), this protein is Dioxygenase cdmD.